Reading from the N-terminus, the 380-residue chain is Cytochrome b (380 aa).

The next 4 helical transmembrane spans lie at 34–54 (FGSLLALCLMTQILTGLLLAM), 78–99 (WLIRNMHANGASFFFICIYMHI), 114–134 (WNTGILLLLTLMATAFVGYVL), and 179–199 (FFALHFLLPFMIAGLTLIHLT). Residues histidine 84 and histidine 98 each contribute to the heme b site. Heme b contacts are provided by histidine 183 and histidine 197. Histidine 202 serves as a coordination point for a ubiquinone. The next 4 helical transmembrane spans lie at 227–247 (LKDILGLTLLLLPLTTMALFS), 289–309 (LGGVLALAASVLVLFLSPLLH), 321–341 (LSQLLFWTLVANLLILTWIGS), and 348–368 (FIIIGQLASTTYFIILLILFP).

This sequence belongs to the cytochrome b family. As to quaternary structure, the cytochrome bc1 complex contains 11 subunits: 3 respiratory subunits (MT-CYB, CYC1 and UQCRFS1), 2 core proteins (UQCRC1 and UQCRC2) and 6 low-molecular weight proteins (UQCRH/QCR6, UQCRB/QCR7, UQCRQ/QCR8, UQCR10/QCR9, UQCR11/QCR10 and a cleavage product of UQCRFS1). This cytochrome bc1 complex then forms a dimer. The cofactor is heme b.

It is found in the mitochondrion inner membrane. Component of the ubiquinol-cytochrome c reductase complex (complex III or cytochrome b-c1 complex) that is part of the mitochondrial respiratory chain. The b-c1 complex mediates electron transfer from ubiquinol to cytochrome c. Contributes to the generation of a proton gradient across the mitochondrial membrane that is then used for ATP synthesis. The polypeptide is Cytochrome b (MT-CYB) (Hydrobates pelagicus (European storm-petrel)).